The primary structure comprises 206 residues: Large ribosomal subunit protein uL4 (206 aa).

This sequence belongs to the universal ribosomal protein uL4 family. In terms of assembly, part of the 50S ribosomal subunit.

One of the primary rRNA binding proteins, this protein initially binds near the 5'-end of the 23S rRNA. It is important during the early stages of 50S assembly. It makes multiple contacts with different domains of the 23S rRNA in the assembled 50S subunit and ribosome. Functionally, forms part of the polypeptide exit tunnel. In Cereibacter sphaeroides (strain KD131 / KCTC 12085) (Rhodobacter sphaeroides), this protein is Large ribosomal subunit protein uL4.